The sequence spans 200 residues: Endochitinase (200 aa).

The active-site Proton donor is E58.

The protein belongs to the glycosyl hydrolase 19 family. Chitinase class I subfamily.

It catalyses the reaction Random endo-hydrolysis of N-acetyl-beta-D-glucosaminide (1-&gt;4)-beta-linkages in chitin and chitodextrins.. Functionally, this protein functions as a defense against chitin-containing fungal pathogens. The sequence is that of Endochitinase from Avena sativa (Oat).